Consider the following 463-residue polypeptide: tRNA-2-methylthio-N(6)-dimethylallyladenosine synthase (463 aa).

The region spanning 5-125 is the MTTase N-terminal domain; that stretch reads RKLHIKSYGC…LPQLLAKAEQ (121 aa). Positions 14, 50, 88, 166, 170, and 173 each coordinate [4Fe-4S] cluster. Residues 152 to 384 form the Radical SAM core domain; that stretch reads RARGISAFVT…QQLIDQQQSA (233 aa). The 63-residue stretch at 387 to 449 folds into the TRAM domain; that stretch reads KAAIGRTVEV…RYSLLGELAS (63 aa).

It belongs to the methylthiotransferase family. MiaB subfamily. As to quaternary structure, monomer. Requires [4Fe-4S] cluster as cofactor.

It is found in the cytoplasm. It catalyses the reaction N(6)-dimethylallyladenosine(37) in tRNA + (sulfur carrier)-SH + AH2 + 2 S-adenosyl-L-methionine = 2-methylsulfanyl-N(6)-dimethylallyladenosine(37) in tRNA + (sulfur carrier)-H + 5'-deoxyadenosine + L-methionine + A + S-adenosyl-L-homocysteine + 2 H(+). In terms of biological role, catalyzes the methylthiolation of N6-(dimethylallyl)adenosine (i(6)A), leading to the formation of 2-methylthio-N6-(dimethylallyl)adenosine (ms(2)i(6)A) at position 37 in tRNAs that read codons beginning with uridine. The sequence is that of tRNA-2-methylthio-N(6)-dimethylallyladenosine synthase from Rhodopseudomonas palustris (strain ATCC BAA-98 / CGA009).